We begin with the raw amino-acid sequence, 577 residues long: Gamma-tubulin complex component gfh1 (577 aa).

This sequence belongs to the TUBGCP family.

The protein localises to the cytoplasm. It localises to the cytoskeleton. The protein resides in the microtubule organizing center. It is found in the spindle pole body. Its function is as follows. Required for proper anchoring of astral microtubules at the spindle pole bodies (SPBs), during anaphase, ensuring correct cell polarity. The protein is Gamma-tubulin complex component gfh1 (gfh1) of Schizosaccharomyces pombe (strain 972 / ATCC 24843) (Fission yeast).